Consider the following 113-residue polypeptide: Large ribosomal subunit protein bL17 (113 aa).

The protein belongs to the bacterial ribosomal protein bL17 family. As to quaternary structure, part of the 50S ribosomal subunit. Contacts protein L32.

This chain is Large ribosomal subunit protein bL17, found in Clostridium botulinum (strain Loch Maree / Type A3).